The chain runs to 431 residues: Adenylosuccinate synthetase (431 aa).

Residues 12–18 and 40–42 contribute to the GTP site; these read GDEGKGK and GHT. The active-site Proton acceptor is aspartate 13. Mg(2+)-binding residues include aspartate 13 and glycine 40. Residues 13–16, 38–41, threonine 130, arginine 144, glutamine 224, threonine 239, and arginine 303 each bind IMP; these read DEGK and NAGH. Histidine 41 serves as the catalytic Proton donor. Residue 299 to 305 participates in substrate binding; the sequence is STTGRPR. GTP contacts are provided by residues arginine 305, 331-333, and 413-415; these read KAD and SIG.

Belongs to the adenylosuccinate synthetase family. Homodimer. Mg(2+) is required as a cofactor.

Its subcellular location is the cytoplasm. It carries out the reaction IMP + L-aspartate + GTP = N(6)-(1,2-dicarboxyethyl)-AMP + GDP + phosphate + 2 H(+). It participates in purine metabolism; AMP biosynthesis via de novo pathway; AMP from IMP: step 1/2. Its function is as follows. Plays an important role in the de novo pathway of purine nucleotide biosynthesis. Catalyzes the first committed step in the biosynthesis of AMP from IMP. The polypeptide is Adenylosuccinate synthetase (Cytophaga hutchinsonii (strain ATCC 33406 / DSM 1761 / CIP 103989 / NBRC 15051 / NCIMB 9469 / D465)).